Reading from the N-terminus, the 317-residue chain is Putative 2-hydroxyacid dehydrogenase SAR2389 (317 aa).

Residues 155–156 (EI), 234–236 (ASR), and Asp260 contribute to the NAD(+) site. Residue Arg236 is part of the active site. Glu265 is an active-site residue. His283 serves as the catalytic Proton donor. 283–286 (HIGN) contributes to the NAD(+) binding site.

This sequence belongs to the D-isomer specific 2-hydroxyacid dehydrogenase family.

The protein is Putative 2-hydroxyacid dehydrogenase SAR2389 of Staphylococcus aureus (strain MRSA252).